The sequence spans 62 residues: Large ribosomal subunit protein bL33 (62 aa).

Belongs to the bacterial ribosomal protein bL33 family.

This is Large ribosomal subunit protein bL33 from Azobacteroides pseudotrichonymphae genomovar. CFP2.